The following is a 299-amino-acid chain: Leucine zipper transcription factor-like protein 1 (299 aa).

Residues leucine 96 to glutamate 296 are a coiled coil. The interval glycine 145–aspartate 299 is interaction with BSS9.

Belongs to the LZTFL1 family. In terms of assembly, self-associates. Interacts with BBS9; the interaction mediates the association of LZTL1 with the BBsome complex and regulates BBSome ciliary trafficking. In terms of tissue distribution, expressed in prostate, ovary, stomach, pancreas, esophagus, breast, liver, bladder, kidney, thyroid, colon and lung (at protein level). Down-regulated in multiple primary tumors (at protein level). Detected in testis, heart, skeletal muscle, thymus, spleen, small intestine, and peripheral blood leukocytes.

It is found in the cytoplasm. Its function is as follows. Regulates ciliary localization of the BBSome complex. Together with the BBSome complex, controls SMO ciliary trafficking and contributes to the sonic hedgehog (SHH) pathway regulation. May play a role in neurite outgrowth. May have tumor suppressor function. This Homo sapiens (Human) protein is Leucine zipper transcription factor-like protein 1 (LZTFL1).